The chain runs to 379 residues: Alkanesulfonate monooxygenase (379 aa).

The protein belongs to the SsuD family.

It catalyses the reaction an alkanesulfonate + FMNH2 + O2 = an aldehyde + FMN + sulfite + H2O + 2 H(+). Catalyzes the desulfonation of aliphatic sulfonates. The polypeptide is Alkanesulfonate monooxygenase (Pseudomonas savastanoi pv. phaseolicola (strain 1448A / Race 6) (Pseudomonas syringae pv. phaseolicola (strain 1448A / Race 6))).